The primary structure comprises 790 residues: Disintegrin and metalloproteinase domain-containing protein 30 (790 aa).

An N-terminal signal peptide occupies residues 1 to 27 (MRSVQIFLSQCRLLLLLVPTMLLKSLG). Positions 28-198 (EDVIFHPEGE…KARLRDFPGS (171 aa)) are excised as a propeptide. Positions 170–177 (QVCGLSDD) match the Cysteine switch motif. Cys172 contacts Zn(2+). Residues 199–687 (YKHPKYLELI…LRGAIPSSIW (489 aa)) are Extracellular-facing. The 191-residue stretch at 203–393 (KYLELILLFD…SGATCLNNIP (191 aa)) folds into the Peptidase M12B domain. N-linked (GlcNAc...) asparagine glycosylation is present at Asn222. 3 cysteine pairs are disulfide-bonded: Cys313/Cys388, Cys353/Cys373, and Cys355/Cys361. His338 is a Zn(2+) binding site. The active site involves Glu339. Zn(2+) contacts are provided by His342 and His348. N-linked (GlcNAc...) asparagine glycosylation is found at Asn372, Asn438, Asn473, and Asn625. The Disintegrin domain maps to 399 to 485 (LKRCGNKIVE…SCPNDVYKQD (87 aa)). A disulfide bridge links Cys457 with Cys477. Residues 629–663 (LQFDCLPEKCNTRGVCNNRKNCHCMYGWAPPFCEE) enclose the EGF-like domain. Intrachain disulfides connect Cys633-Cys644, Cys638-Cys650, and Cys652-Cys661. A helical transmembrane segment spans residues 688–708 (VVSIIMFRLILLILSVVFVFF). Topologically, residues 709–790 (RQVIGNHLKP…KAKSVKKQKK (82 aa)) are cytoplasmic. A compositionally biased stretch (basic and acidic residues) spans 720 to 779 (QEKMPLSKAKTEQEESKTKTVQEESKTKTGQEESEAKTGQEESKAKTGQEESKANIESKR). Positions 720–790 (QEKMPLSKAK…KAKSVKKQKK (71 aa)) are disordered. 5 repeat units span residues 732–740 (QEESKTKTV), 741–749 (QEESKTKTG), 750–758 (QEESEAKTG), 759–767 (QEESKAKTG), and 768–776 (QEESKANIE). Positions 732–776 (QEESKTKTVQEESKTKTGQEESEAKTGQEESKAKTGQEESKANIE) are 5 X 9 AA approximate repeats. A compositionally biased stretch (basic residues) spans 780–790 (PKAKSVKKQKK).

In terms of assembly, interacts with CTSD; this leads to activation of CTSD. Zn(2+) is required as a cofactor. Expressed in brain neurons (at protein level). Expressed in testis.

It localises to the late endosome membrane. Plays a role in lysosomal amyloid precursor protein (APP) processing by cleaving and activating CTSD/cathepsin D which leads to APP degradation. The sequence is that of Disintegrin and metalloproteinase domain-containing protein 30 (ADAM30) from Homo sapiens (Human).